The chain runs to 659 residues: Crossover junction endonuclease MUS81 (659 aa).

Positions 59–78 match the Helix-hairpin-helix motif 1 motif; the sequence is KDLSQIKGFGKWMVKLMKGY. Residues 404–503 form the ERCC4 domain; that stretch reads ILILDDREKF…KKLIYILEGD (100 aa). A Helix-hairpin-helix motif 2 motif is present at residues 585 to 622; it reads TISDVFAIQLMQVPQVTEEIAIAVLDMYPTLLSLASAY.

The protein belongs to the XPF family. Forms a heterodimer with EME1A or EME1B. Mg(2+) is required as a cofactor. The cofactor is Ca(2+). In terms of tissue distribution, ubiquitous but preferentially expressed in young flowers buds, notably in anthers.

It is found in the nucleus. It localises to the nucleolus. In terms of biological role, interacts with EME1 to form a DNA structure-specific endonuclease with substrate preference for branched DNA structures with a 5'-end at the branch nick. Typical substrates include 3'-flap structures, D-loops, replication forks, nicked Holliday junctions and also intact Holliday junctions with a reduced efficiency. May be required in mitosis for the processing of stalled or collapsed replication fork intermediates. Plays a role in DNA repair and in genotoxic stress-induced homologous recombination (HR) in somatic cells. Mediates a subset of meiotic recombination events that are insensitive to crossover interference. Together with SEND1, essential for the resolution of toxic replication structures to ensure genome stability, and to maintain telomere integrity and replication. The protein is Crossover junction endonuclease MUS81 of Arabidopsis thaliana (Mouse-ear cress).